The following is an 870-amino-acid chain: DNA mismatch repair protein MutS (870 aa).

622-629 (GPNMGGKS) serves as a coordination point for ATP.

This sequence belongs to the DNA mismatch repair MutS family.

In terms of biological role, this protein is involved in the repair of mismatches in DNA. It is possible that it carries out the mismatch recognition step. This protein has a weak ATPase activity. In Methylibium petroleiphilum (strain ATCC BAA-1232 / LMG 22953 / PM1), this protein is DNA mismatch repair protein MutS.